The following is a 356-amino-acid chain: MALIWRLISEEHSIVNLTDDQIETLSSTILKKSSKLSINDKKREIKPIIKKTDFEDKISESGYTETFDTISQYFKLSYQKILVVHNYIDHISSIASNLMNIDLKSIDLLFEEINTINYLKQESHQKLMTDSEMALKNKIVHQYVKNPNNVTLYKKILESINTITTKYNLQKIQESLCSEIKRIDNLLVNSYQKELDKTTNLTKIITHLESIDNNTTLHELFKKIQSNPKIIHENIDKTDQWIMFVDKCIKLNIDKSLIVSLLEIIIVQKILFYNDITRTNSIKDISIIYPQCLNVFLLSNLNKSFIFSKLYMFLNYTMRYSGKNLGDYIKSVTQKDYDNLLFLEQKLLDLCVNSNE.

This is an uncharacterized protein from Acanthamoeba polyphaga (Amoeba).